The sequence spans 594 residues: UvrABC system protein C (594 aa).

In terms of domain architecture, GIY-YIG spans 14–91 (DQPGCYLMKD…IKKHDPKYNI (78 aa)). Residues 196-231 (KEVRSELETKMYEASEKLEFERAKELRDQIAHIDAI) form the UVR domain.

It belongs to the UvrC family. As to quaternary structure, interacts with UvrB in an incision complex.

It is found in the cytoplasm. Functionally, the UvrABC repair system catalyzes the recognition and processing of DNA lesions. UvrC both incises the 5' and 3' sides of the lesion. The N-terminal half is responsible for the 3' incision and the C-terminal half is responsible for the 5' incision. This chain is UvrABC system protein C, found in Bacillus thuringiensis (strain Al Hakam).